The following is a 336-amino-acid chain: Lipoyl synthase (336 aa).

[4Fe-4S] cluster-binding residues include Cys81, Cys86, Cys92, Cys107, Cys111, Cys114, and Ser323. The Radical SAM core domain maps to 93-312 (FGHGTATFMI…EDYGYELGFS (220 aa)).

Belongs to the radical SAM superfamily. Lipoyl synthase family. [4Fe-4S] cluster is required as a cofactor.

It localises to the cytoplasm. It carries out the reaction [[Fe-S] cluster scaffold protein carrying a second [4Fe-4S](2+) cluster] + N(6)-octanoyl-L-lysyl-[protein] + 2 oxidized [2Fe-2S]-[ferredoxin] + 2 S-adenosyl-L-methionine + 4 H(+) = [[Fe-S] cluster scaffold protein] + N(6)-[(R)-dihydrolipoyl]-L-lysyl-[protein] + 4 Fe(3+) + 2 hydrogen sulfide + 2 5'-deoxyadenosine + 2 L-methionine + 2 reduced [2Fe-2S]-[ferredoxin]. It participates in protein modification; protein lipoylation via endogenous pathway; protein N(6)-(lipoyl)lysine from octanoyl-[acyl-carrier-protein]: step 2/2. Its function is as follows. Catalyzes the radical-mediated insertion of two sulfur atoms into the C-6 and C-8 positions of the octanoyl moiety bound to the lipoyl domains of lipoate-dependent enzymes, thereby converting the octanoylated domains into lipoylated derivatives. This chain is Lipoyl synthase, found in Stenotrophomonas maltophilia (strain R551-3).